The sequence spans 229 residues: Putative N-acetylmannosamine-6-phosphate 2-epimerase (229 aa).

The protein belongs to the NanE family.

The catalysed reaction is an N-acyl-D-glucosamine 6-phosphate = an N-acyl-D-mannosamine 6-phosphate. It functions in the pathway amino-sugar metabolism; N-acetylneuraminate degradation; D-fructose 6-phosphate from N-acetylneuraminate: step 3/5. Its function is as follows. Converts N-acetylmannosamine-6-phosphate (ManNAc-6-P) to N-acetylglucosamine-6-phosphate (GlcNAc-6-P). The protein is Putative N-acetylmannosamine-6-phosphate 2-epimerase of Escherichia coli O157:H7.